Here is a 378-residue protein sequence, read N- to C-terminus: Anhydro-N-acetylmuramic acid kinase 2 (378 aa).

14-22 (GTVLDGNID) contributes to the ATP binding site.

Belongs to the anhydro-N-acetylmuramic acid kinase family.

The enzyme catalyses 1,6-anhydro-N-acetyl-beta-muramate + ATP + H2O = N-acetyl-D-muramate 6-phosphate + ADP + H(+). The protein operates within amino-sugar metabolism; 1,6-anhydro-N-acetylmuramate degradation. It functions in the pathway cell wall biogenesis; peptidoglycan recycling. Functionally, catalyzes the specific phosphorylation of 1,6-anhydro-N-acetylmuramic acid (anhMurNAc) with the simultaneous cleavage of the 1,6-anhydro ring, generating MurNAc-6-P. Is required for the utilization of anhMurNAc either imported from the medium or derived from its own cell wall murein, and thus plays a role in cell wall recycling. The sequence is that of Anhydro-N-acetylmuramic acid kinase 2 from Jannaschia sp. (strain CCS1).